A 284-amino-acid chain; its full sequence is Four and a half LIM domains protein 5 (284 aa).

A C4-type zinc finger spans residues 8–32 (CQYCTASLLGKKYVLKDDSLFCVTC). LIM zinc-binding domains are found at residues 39–100 (NYCE…ECSS), 101–160 (KCFH…KEFA), 161–220 (HYCN…LYAN), and 223–283 (VACS…MDSD).

Interacts with CREM (via the third LIM domain). Interacts (via second LIM domain) with SPAG8.

The protein resides in the nucleus. May be involved in the regulation of spermatogenesis. Stimulates CREM transcriptional activity in a phosphorylation-independent manner. The chain is Four and a half LIM domains protein 5 (FHL5) from Macaca fascicularis (Crab-eating macaque).